We begin with the raw amino-acid sequence, 394 residues long: MPALDLLLNLHKSLFVGFPGRVLVSLFGVSLLLLCLAGVLLHSRRWRDLRRWRRDRGLRLALFDLHGLIGIWGLPWLLLFGFTGALSGLGALGTLLLAPVAYPQEPNRVFVELMGPPPPAAEGRPLASRIDLDRLLAGDAVRAPGFVAQRLSLSHAGDVAGSVEIAGIRRGLPSTANFERHRYRLADGTLLGERSSAQRGFWLRAFIAVQPLHFAQYQWLGPGWSAALRGLHLAMGLGACLLCASGLYLWLQRRASAPDARVRLLQRLSQGFCAGLVAAAALLLLGLQLAPSELLAGPWPGRLFLVLWAAAGLAALLLPGDWPLARGLLGVAGLACLAAAVAHLAPWLMRGRLPALGPDLTLILCGALLIRHAWMQARAAAPPAHPRVTGDHHA.

Helical transmembrane passes span 22–42 (VLVS…VLLH), 60–80 (LALF…LLLF), 81–101 (GFTG…APVA), 231–251 (LHLA…YLWL), 271–291 (GFCA…QLAP), 303–323 (LFLV…GDWP), 328–348 (LLGV…APWL), and 355–375 (ALGP…HAWM).

It is found in the cell membrane. This is an uncharacterized protein from Pseudomonas aeruginosa (strain ATCC 15692 / DSM 22644 / CIP 104116 / JCM 14847 / LMG 12228 / 1C / PRS 101 / PAO1).